The primary structure comprises 274 residues: Large ribosomal subunit protein uL2 (274 aa).

Positions 224 to 256 (VMNPVDHPHGGGEGKTGEGRHPVDPWGNLTKGY) are disordered. A compositionally biased stretch (basic and acidic residues) spans 229–246 (DHPHGGGEGKTGEGRHPV).

It belongs to the universal ribosomal protein uL2 family. Part of the 50S ribosomal subunit. Forms a bridge to the 30S subunit in the 70S ribosome.

One of the primary rRNA binding proteins. Required for association of the 30S and 50S subunits to form the 70S ribosome, for tRNA binding and peptide bond formation. It has been suggested to have peptidyltransferase activity; this is somewhat controversial. Makes several contacts with the 16S rRNA in the 70S ribosome. The sequence is that of Large ribosomal subunit protein uL2 from Polaromonas sp. (strain JS666 / ATCC BAA-500).